Reading from the N-terminus, the 282-residue chain is tRNA uridine(34) hydroxylase (282 aa).

Residues Glu128–Tyr222 form the Rhodanese domain. Cys182 functions as the Cysteine persulfide intermediate in the catalytic mechanism.

It belongs to the TrhO family.

It carries out the reaction uridine(34) in tRNA + AH2 + O2 = 5-hydroxyuridine(34) in tRNA + A + H2O. In terms of biological role, catalyzes oxygen-dependent 5-hydroxyuridine (ho5U) modification at position 34 in tRNAs. The protein is tRNA uridine(34) hydroxylase of Cupriavidus pinatubonensis (strain JMP 134 / LMG 1197) (Cupriavidus necator (strain JMP 134)).